The sequence spans 276 residues: NAD-capped RNA hydrolase NudC (276 aa).

Position 82 (Arg-82) interacts with substrate. Zn(2+) is bound by residues Cys-112 and Cys-115. Residue Glu-125 participates in substrate binding. Zn(2+) contacts are provided by Cys-130 and Cys-133. Tyr-138 lines the substrate pocket. A Nudix hydrolase domain is found at 139 to 262 (PRISPSMIVL…SIARYLIDVY (124 aa)). Ala-172, Glu-188, and Glu-192 together coordinate a divalent metal cation. The Nudix box motif lies at 173–194 (GFAEPGESAEDCLIREVREEVQ). 206-213 (QCWPFPHS) is a substrate binding site. Residue Glu-233 coordinates a divalent metal cation. Residue Ala-255 participates in substrate binding.

This sequence belongs to the Nudix hydrolase family. NudC subfamily. Homodimer. Requires Mg(2+) as cofactor. The cofactor is Mn(2+). It depends on Zn(2+) as a cofactor.

The catalysed reaction is a 5'-end NAD(+)-phospho-ribonucleoside in mRNA + H2O = a 5'-end phospho-adenosine-phospho-ribonucleoside in mRNA + beta-nicotinamide D-ribonucleotide + 2 H(+). It catalyses the reaction NAD(+) + H2O = beta-nicotinamide D-ribonucleotide + AMP + 2 H(+). The enzyme catalyses NADH + H2O = reduced beta-nicotinamide D-ribonucleotide + AMP + 2 H(+). MRNA decapping enzyme that specifically removes the nicotinamide adenine dinucleotide (NAD) cap from a subset of mRNAs by hydrolyzing the diphosphate linkage to produce nicotinamide mononucleotide (NMN) and 5' monophosphate mRNA. The NAD-cap is present at the 5'-end of some mRNAs and stabilizes RNA against 5'-processing. Has preference for mRNAs with a 5'-end purine. Catalyzes the hydrolysis of a broad range of dinucleotide pyrophosphates. In Pseudomonas fluorescens (strain Pf0-1), this protein is NAD-capped RNA hydrolase NudC.